A 430-amino-acid chain; its full sequence is DNA polymerase IV 1 (430 aa).

In terms of domain architecture, UmuC spans 45–225 (LAHIDCDAFY…KPVTLIWGVG (181 aa)). Asp-49 and Asp-142 together coordinate Mg(2+). Residue Glu-143 is part of the active site.

The protein belongs to the DNA polymerase type-Y family. In terms of assembly, monomer. Requires Mg(2+) as cofactor.

Its subcellular location is the cytoplasm. The catalysed reaction is DNA(n) + a 2'-deoxyribonucleoside 5'-triphosphate = DNA(n+1) + diphosphate. In terms of biological role, poorly processive, error-prone DNA polymerase involved in untargeted mutagenesis. Copies undamaged DNA at stalled replication forks, which arise in vivo from mismatched or misaligned primer ends. These misaligned primers can be extended by PolIV. Exhibits no 3'-5' exonuclease (proofreading) activity. May be involved in translesional synthesis, in conjunction with the beta clamp from PolIII. The polypeptide is DNA polymerase IV 1 (dinB1) (Rhizobium meliloti (strain 1021) (Ensifer meliloti)).